A 72-amino-acid chain; its full sequence is Small ribosomal subunit protein bS18 (72 aa).

This sequence belongs to the bacterial ribosomal protein bS18 family. Part of the 30S ribosomal subunit. Forms a tight heterodimer with protein bS6.

In terms of biological role, binds as a heterodimer with protein bS6 to the central domain of the 16S rRNA, where it helps stabilize the platform of the 30S subunit. In Francisella tularensis subsp. holarctica (strain FTNF002-00 / FTA), this protein is Small ribosomal subunit protein bS18.